Consider the following 42-residue polypeptide: Photosystem I reaction center subunit IX (42 aa).

Residues tyrosine 7–isoleucine 27 traverse the membrane as a helical segment.

This sequence belongs to the PsaJ family.

It localises to the plastid. Its subcellular location is the chloroplast thylakoid membrane. Its function is as follows. May help in the organization of the PsaE and PsaF subunits. This is Photosystem I reaction center subunit IX from Daucus carota (Wild carrot).